The following is a 407-amino-acid chain: MTNKVNSYGWKALIGSAVGYGMDGFDLLILGFMLSAISADLNLTPAQGGSLVTWTLIGAVFGGILFGALSDKYGRVRVLTWTILLFAVFTGLCAIAQGYWDLLIYRTIAGIGLGGEFGIGMALAAEAWPARHRAKAASYVALGWQVGVLGAALLTPLLLPHIGWRGMFLVGIFPAFVAWFLRSHLHEPEIFTQKQTALSTQSSFTDKLRSFQLLIKDKATSKISLGIVVLTSVQNFGYYGIMIWLPNFLSKQLGFSLTKSGLWTAVTVCGMMAGIWIFGQLADRIGRKPSFLLFQLGAVISIVVYSQLTDPDIMLLAGAFLGMFVNGMLGGYGALMAEAYPTEARATAQNVLFNIGRAVGGFGPVVVGSVVLAYSFQTAIALLAIIYVIDMLATIFLIPELKGKALD.

Topologically, residues 1–16 are cytoplasmic; that stretch reads MTNKVNSYGWKALIGS. A helical membrane pass occupies residues 17-37; sequence AVGYGMDGFDLLILGFMLSAI. Residues 38 to 48 are Periplasmic-facing; sequence SADLNLTPAQG. The chain crosses the membrane as a helical span at residues 49–69; the sequence is GSLVTWTLIGAVFGGILFGAL. Residues 70 to 77 are Cytoplasmic-facing; sequence SDKYGRVR. A helical membrane pass occupies residues 78–98; the sequence is VLTWTILLFAVFTGLCAIAQG. Topologically, residues 99 to 107 are periplasmic; sequence YWDLLIYRT. Residues 108 to 128 traverse the membrane as a helical segment; the sequence is IAGIGLGGEFGIGMALAAEAW. At 129 to 138 the chain is on the cytoplasmic side; that stretch reads PARHRAKAAS. Residues 139–159 form a helical membrane-spanning segment; sequence YVALGWQVGVLGAALLTPLLL. Proline 160 is a topological domain (periplasmic). The helical transmembrane segment at 161 to 181 threads the bilayer; that stretch reads HIGWRGMFLVGIFPAFVAWFL. Over 182–224 the chain is Cytoplasmic; sequence RSHLHEPEIFTQKQTALSTQSSFTDKLRSFQLLIKDKATSKIS. Residues 225–245 traverse the membrane as a helical segment; the sequence is LGIVVLTSVQNFGYYGIMIWL. The Periplasmic portion of the chain corresponds to 246 to 261; sequence PNFLSKQLGFSLTKSG. A helical transmembrane segment spans residues 262–282; sequence LWTAVTVCGMMAGIWIFGQLA. The Cytoplasmic portion of the chain corresponds to 283-288; the sequence is DRIGRK. The helical transmembrane segment at 289 to 309 threads the bilayer; the sequence is PSFLLFQLGAVISIVVYSQLT. At 310-312 the chain is on the periplasmic side; the sequence is DPD. Residues 313–333 form a helical membrane-spanning segment; the sequence is IMLLAGAFLGMFVNGMLGGYG. The Cytoplasmic segment spans residues 334 to 357; that stretch reads ALMAEAYPTEARATAQNVLFNIGR. A run of 2 helical transmembrane segments spans residues 358 to 378 and 379 to 399; these read AVGG…SFQT and AIAL…FLIP. Over 400–407 the chain is Cytoplasmic; sequence ELKGKALD.

Belongs to the major facilitator superfamily. Aromatic acid:H(+) symporter (AAHS) (TC 2.A.1.15) family.

It localises to the cell inner membrane. This chain is Putative metabolite transport protein HI_1104, found in Haemophilus influenzae (strain ATCC 51907 / DSM 11121 / KW20 / Rd).